The primary structure comprises 572 residues: Urease subunit alpha (572 aa).

Positions glycine 133–phenylalanine 572 constitute a Urease domain. 3 residues coordinate Ni(2+): histidine 138, histidine 140, and lysine 221. An N6-carboxylysine modification is found at lysine 221. Residue histidine 223 participates in substrate binding. Ni(2+)-binding residues include histidine 250 and histidine 276. The active-site Proton donor is histidine 324. Ni(2+) is bound at residue aspartate 364.

Belongs to the metallo-dependent hydrolases superfamily. Urease alpha subunit family. Heterotrimer of UreA (gamma), UreB (beta) and UreC (alpha) subunits. Three heterotrimers associate to form the active enzyme. Ni cation serves as cofactor. In terms of processing, carboxylation allows a single lysine to coordinate two nickel ions.

It is found in the cytoplasm. It catalyses the reaction urea + 2 H2O + H(+) = hydrogencarbonate + 2 NH4(+). The protein operates within nitrogen metabolism; urea degradation; CO(2) and NH(3) from urea (urease route): step 1/1. The polypeptide is Urease subunit alpha (Streptococcus thermophilus (strain CNRZ 1066)).